Here is a 435-residue protein sequence, read N- to C-terminus: tRNA-2-methylthio-N(6)-dimethylallyladenosine synthase (435 aa).

One can recognise an MTTase N-terminal domain in the interval 2-117; the sequence is KKASIITYGC…IPQAIEKIEN (116 aa). The [4Fe-4S] cluster site is built by C11, C47, C80, C154, C158, and C161. The Radical SAM core domain occupies 140–370; it reads FGSDQTASIS…MEVQNKCSFY (231 aa). Residues 373–435 form the TRAM domain; the sequence is SKYKGRIVKV…KTWTLYGEIV (63 aa).

Belongs to the methylthiotransferase family. MiaB subfamily. As to quaternary structure, monomer. [4Fe-4S] cluster serves as cofactor.

It localises to the cytoplasm. The catalysed reaction is N(6)-dimethylallyladenosine(37) in tRNA + (sulfur carrier)-SH + AH2 + 2 S-adenosyl-L-methionine = 2-methylsulfanyl-N(6)-dimethylallyladenosine(37) in tRNA + (sulfur carrier)-H + 5'-deoxyadenosine + L-methionine + A + S-adenosyl-L-homocysteine + 2 H(+). Functionally, catalyzes the methylthiolation of N6-(dimethylallyl)adenosine (i(6)A), leading to the formation of 2-methylthio-N6-(dimethylallyl)adenosine (ms(2)i(6)A) at position 37 in tRNAs that read codons beginning with uridine. The protein is tRNA-2-methylthio-N(6)-dimethylallyladenosine synthase of Fusobacterium nucleatum subsp. nucleatum (strain ATCC 25586 / DSM 15643 / BCRC 10681 / CIP 101130 / JCM 8532 / KCTC 2640 / LMG 13131 / VPI 4355).